The following is a 1129-amino-acid chain: SMC5-SMC6 complex localization factor protein 2 (1129 aa).

Disordered stretches follow at residues 71 to 178, 312 to 343, and 955 to 1057; these read VKAR…SILN, NTSS…TEQA, and MLYD…QLEG. Basic residues predominate over residues 72–87; the sequence is KARRHTLPHSSHRRSP. Residues 93-110 are compositionally biased toward polar residues; the sequence is LLFQQRPRNSSGQFTHNP. Composition is skewed to basic and acidic residues over residues 112–130 and 149–166; these read QKKD…KKEL and RKSE…RPRV. 2 stretches are compositionally biased toward polar residues: residues 169 to 178 and 324 to 343; these read QATSSSSILN and TGRS…TEQA. 2 stretches are compositionally biased toward acidic residues: residues 999–1014 and 1033–1048; these read ESEE…EEDW and SAED…EEES.

This sequence belongs to the FAM178 family.

The protein localises to the nucleus. Functionally, plays a role in the DNA damage response (DDR) pathway by regulating postreplication repair of UV-damaged DNA and genomic stability maintenance. Promotes the recruitment of the SMC5-SMC6 complex to DNA lesions. The chain is SMC5-SMC6 complex localization factor protein 2 (slf2) from Danio rerio (Zebrafish).